We begin with the raw amino-acid sequence, 416 residues long: MSTTTRTLQAIKFDRDNIKLEILDQLLLPYSTSYIPINNIEDAFKAIKLMQVRGAPAIAIVGAFSVVVEVSNYLKQSDSNQKTIKNLNDSLNYLITSRPTAVNLANALNDIKQLLQKYNETDIIGEKIYQQIYDYAITLYDEDLANNKKIGENGLKYIIDTLTEQNFKGPFSIMTICNTGSLATSGHGTALGIIRSTYQALQKNNSKQDFWLDHIYPCETRPYNQGAKLTTYELDYEQIPFTLICDNMVSSLINTLSDDNKKPIKIDQSAPVKFIIVGADRIVENGDTANKIGTFQLSTIANFFNTNRFNTTATATNKQIKFIVAAPKTTIDLNTKTGDDIVIEERPANELTTLVGPLLNESGKVGEKLTVGIATPGISVWNPAFDVTPHELIDSIVTEDPHVFTKDKNGEFNLIK.

The active-site Proton donor is aspartate 280.

Belongs to the eIF-2B alpha/beta/delta subunits family. MtnA subfamily.

It localises to the cytoplasm. The protein localises to the nucleus. It carries out the reaction 5-(methylsulfanyl)-alpha-D-ribose 1-phosphate = 5-(methylsulfanyl)-D-ribulose 1-phosphate. The protein operates within amino-acid biosynthesis; L-methionine biosynthesis via salvage pathway; L-methionine from S-methyl-5-thio-alpha-D-ribose 1-phosphate: step 1/6. Catalyzes the interconversion of methylthioribose-1-phosphate (MTR-1-P) into methylthioribulose-1-phosphate (MTRu-1-P). The polypeptide is Methylthioribose-1-phosphate isomerase (Candida albicans (strain SC5314 / ATCC MYA-2876) (Yeast)).